The primary structure comprises 246 residues: uncharacterized protein (246 aa).

4 helical membrane-spanning segments follow: residues 32-52 (TLFF…VGFI), 69-89 (IIAI…MCPF), 121-141 (IYFK…GVKI), and 146-166 (LAYL…MFFC). 2 4Fe-4S ferredoxin-type domains span residues 185–213 (FKLK…ITEK) and 210–239 (ITEK…FSAF). Cys-194, Cys-197, Cys-200, Cys-204, Cys-219, Cys-222, Cys-225, and Cys-229 together coordinate [4Fe-4S] cluster.

The protein resides in the cell membrane. This is an uncharacterized protein from Methanocaldococcus jannaschii (strain ATCC 43067 / DSM 2661 / JAL-1 / JCM 10045 / NBRC 100440) (Methanococcus jannaschii).